Here is a 357-residue protein sequence, read N- to C-terminus: DNA replication and repair protein RecF (357 aa).

30–37 provides a ligand contact to ATP; sequence GANGSGKT.

It belongs to the RecF family.

It is found in the cytoplasm. Its function is as follows. The RecF protein is involved in DNA metabolism; it is required for DNA replication and normal SOS inducibility. RecF binds preferentially to single-stranded, linear DNA. It also seems to bind ATP. The protein is DNA replication and repair protein RecF of Salmonella schwarzengrund (strain CVM19633).